A 218-amino-acid polypeptide reads, in one-letter code: MTAPLTLALSKGRIFEETVPLLAAAGVTVAEDPERSRKLILPTTDPNLRVIVVRATDVPTYVEYGAADFGVAGKDVLLEHGGGGLYQPIDLNIARCRMSVAVPAGFDYANAVRQGARLRVATKYVETAREHFAAKGVHVDLIKLYGSMELAPLVGLADAIVDLVSSGGTLKANNLVEVEEIMPISSRLVVNQAALKLKRAALKPFLDAFERASQGGGA.

It belongs to the ATP phosphoribosyltransferase family. Short subfamily. In terms of assembly, heteromultimer composed of HisG and HisZ subunits.

The protein localises to the cytoplasm. The enzyme catalyses 1-(5-phospho-beta-D-ribosyl)-ATP + diphosphate = 5-phospho-alpha-D-ribose 1-diphosphate + ATP. It participates in amino-acid biosynthesis; L-histidine biosynthesis; L-histidine from 5-phospho-alpha-D-ribose 1-diphosphate: step 1/9. Catalyzes the condensation of ATP and 5-phosphoribose 1-diphosphate to form N'-(5'-phosphoribosyl)-ATP (PR-ATP). Has a crucial role in the pathway because the rate of histidine biosynthesis seems to be controlled primarily by regulation of HisG enzymatic activity. The chain is ATP phosphoribosyltransferase from Burkholderia thailandensis (strain ATCC 700388 / DSM 13276 / CCUG 48851 / CIP 106301 / E264).